The following is a 278-amino-acid chain: Prohibitin-7, mitochondrial (278 aa).

The Mitochondrial matrix segment spans residues 1–14; that stretch reads MNVKKVPNVPGSPA. The chain crosses the membrane as a helical; Signal-anchor for type II membrane protein span at residues 15–37; the sequence is LSALLKLGVIGGLGLYCIGSSMY. At 38–278 the chain is on the mitochondrial intermembrane side; it reads NVDGGHRAIV…NSSDLLISKQ (241 aa). The stretch at 186-220 forms a coiled coil; that stretch reads KEFTEAIEKKQVAAQEAERAKFIVEKAEQDKKSAI.

Belongs to the prohibitin family. As to quaternary structure, component of a prohibitin multimeric complex in mitochondrial membranes.

The protein resides in the mitochondrion inner membrane. Its function is as follows. Prohibitin probably acts as a holdase/unfoldase for the stabilization of newly synthesized mitochondrial proteins. This Arabidopsis thaliana (Mouse-ear cress) protein is Prohibitin-7, mitochondrial (PHB7).